A 66-amino-acid polypeptide reads, in one-letter code: Large ribosomal subunit protein uL29 (66 aa).

It belongs to the universal ribosomal protein uL29 family.

The protein is Large ribosomal subunit protein uL29 of Sinorhizobium fredii (strain NBRC 101917 / NGR234).